A 1777-amino-acid polypeptide reads, in one-letter code: FERM and PDZ domain-containing protein 3 (1777 aa).

Residues 21-98 enclose the PDZ domain; the sequence is QVTVHRDPIY…FIVLTVLHTH (78 aa). An FERM domain is found at 147–461; it reads NVLKVFLENG…GYCRLLLDSR (315 aa). Disordered regions lie at residues 491–520, 555–574, 622–697, 832–871, 1014–1216, 1309–1346, and 1732–1765; these read TGGH…TPPP, ETRP…QGYE, QLGP…GRHL, SLGR…QGER, SAPE…PFRL, RPQA…LSSP, and QQQQ…ATVM. Residues 502–511 are compositionally biased toward polar residues; the sequence is YVGSVGTSPR. Basic and acidic residues predominate over residues 555 to 564; it reads ETRPRTKSDP. The span at 649-659 shows a compositional bias: acidic residues; it reads SEEEEEEEDET. Polar residues-rich tracts occupy residues 840-850, 1015-1035, 1046-1056, and 1094-1111; these read PSLQPIATGQS, APET…SSPR, HLSQQEDSLPV, and LQKQ…QLES. Residues 1134–1168 are compositionally biased toward low complexity; that stretch reads QSPSCQSRSHSPSCQPHGHSPSSQSRGQSPSCQPR. Positions 1172–1202 are enriched in polar residues; the sequence is PLRSQAASRQVSTMPSRKLETTLNGAHSTSE. The segment covering 1732 to 1751 has biased composition (low complexity); the sequence is QQQQQQQQQQQQVAAAAGAA.

The polypeptide is FERM and PDZ domain-containing protein 3 (Homo sapiens (Human)).